The chain runs to 199 residues: Ribonuclease HII (199 aa).

The RNase H type-2 domain maps to 13–199 (GLVAGVDEVG…FAPIAKILCG (187 aa)). Residues aspartate 19, glutamate 20, and aspartate 110 each coordinate a divalent metal cation.

This sequence belongs to the RNase HII family. Mn(2+) is required as a cofactor. Requires Mg(2+) as cofactor.

It is found in the cytoplasm. The catalysed reaction is Endonucleolytic cleavage to 5'-phosphomonoester.. Its function is as follows. Endonuclease that specifically degrades the RNA of RNA-DNA hybrids. The protein is Ribonuclease HII of Jannaschia sp. (strain CCS1).